The following is a 710-amino-acid chain: MTERLLRYFRDKQQDVQSEKTYDTQCPFCSMQCKMQLVEQTIVTRKKYTAIGIDNPTTQGRLCIKGMNAHQHALNSSRITRPLLKKNGEFMPVSWEEALNHIKDQVTMIQTEHGHDAMAVYGSASITNEEAYLLGKFARVGLQTKYIDYNGRLCMSAAATAANQTFGADRGLTNPLSDIPHTRVIILAGTNIAECQPTIMPYFEKAKENGAYFIAIDPRETATTKIADLHLKIKPGTDAALANGLVKIIIDEQLINEDFIQSRTNGFEELKQHTDSLDLNDIAEQTSVSLVDIRKAAVKFAKETSGMLFTARGIEQQTDGTAAVKGFLNMVLITGKIGKPYSGYGAITGQGNGQGAREHGQKADQLPGYRSIENEEHRAHIAKVWGIHQDELPRKGVSAYEMMEKINDGDIKGLFLMCSNPAVSSPNANLVKKALRRLTFFVAIDLFISETAKYADVILPASSYLEDEGTMTNVEGRVTLREASRPCPGEAKHDWQIICDLASALGKGRYFSYTSAEDIFNELREASRGGIADYSGISYGRLRREGGIHWPCPESDHPGTGRLFTESFAHPDQKAALSVIPNEPPVPKEKPTADYPLYLTTGRVMSHYLTGVQTRKSAALAARHFESFMEIHPQTAATYNIEDRVLVKIESPRGSITVRSKLSEQIRKDTVFVPIHWADAQNVNDLIGEALDPACKMPGFKVCAVRIIPI.

Positions 19–77 constitute a 4Fe-4S Mo/W bis-MGD-type domain; sequence EKTYDTQCPFCSMQCKMQLVEQTIVTRKKYTAIGIDNPTTQGRLCIKGMNAHQHALNSS. Positions 26, 29, 33, and 63 each coordinate [4Fe-4S] cluster.

It belongs to the prokaryotic molybdopterin-containing oxidoreductase family. The cofactor is [4Fe-4S] cluster. Mo-bis(molybdopterin guanine dinucleotide) is required as a cofactor.

Its pathway is nitrogen metabolism; nitrate reduction (denitrification); dinitrogen from nitrate: step 1/4. Its function is as follows. Nitrate reductase is a key enzyme involved in the first step of nitrate assimilation in plants, fungi and bacteria. The protein is Assimilatory nitrate reductase catalytic subunit (nasC) of Bacillus subtilis (strain 168).